The sequence spans 349 residues: Dipeptide transport ATP-binding protein DppD (349 aa).

In terms of domain architecture, ABC transporter spans 7-258 (LEVKNLHVNF…PQHPYTWGLL (252 aa)). 43-50 (GESGSGKS) provides a ligand contact to ATP.

It belongs to the ABC transporter superfamily. In terms of assembly, the complex is composed of two ATP-binding proteins (DppD and DppF), two transmembrane proteins (DppB and DppC) and a solute-binding protein (DppA).

The protein resides in the cell membrane. It catalyses the reaction a dipeptide(out) + ATP + H2O = a dipeptide(in) + ADP + phosphate + H(+). In terms of biological role, part of the ABC transporter DppABCDF involved in dipeptide transport. Responsible for energy coupling to the transport system. This Lactococcus lactis subsp. cremoris (strain MG1363) protein is Dipeptide transport ATP-binding protein DppD.